Consider the following 418-residue polypeptide: Glutamyl-tRNA reductase (418 aa).

Substrate-binding positions include 49-52, serine 107, 112-114, and glutamine 118; these read TCNR and EPQ. The active-site Nucleophile is the cysteine 50. Position 187 to 192 (187 to 192) interacts with NADP(+); the sequence is GAGETI.

This sequence belongs to the glutamyl-tRNA reductase family. As to quaternary structure, homodimer.

It carries out the reaction (S)-4-amino-5-oxopentanoate + tRNA(Glu) + NADP(+) = L-glutamyl-tRNA(Glu) + NADPH + H(+). The protein operates within porphyrin-containing compound metabolism; protoporphyrin-IX biosynthesis; 5-aminolevulinate from L-glutamyl-tRNA(Glu): step 1/2. Its function is as follows. Catalyzes the NADPH-dependent reduction of glutamyl-tRNA(Glu) to glutamate 1-semialdehyde (GSA). The polypeptide is Glutamyl-tRNA reductase (Vibrio campbellii (strain ATCC BAA-1116)).